Consider the following 204-residue polypeptide: Terpene cyclase ausL (204 aa).

5 helical membrane passes run 19–39, 49–69, 75–95, 114–134, and 138–158; these read LSEM…LAMV, AIAV…AWIY, HWQG…AATL, LVLL…CLAL, and GALG…SAAV.

The protein belongs to the paxB family.

It is found in the membrane. It participates in secondary metabolite biosynthesis; terpenoid biosynthesis. Its function is as follows. Terpene cyclase; part of the gene cluster B that mediates the biosynthesis of austinol and dehydroaustinol, two fungal meroterpenoids. The first step of the pathway is the synthesis of 3,5-dimethylorsellinic acid by the polyketide synthase ausA. 3,5-dimethylorsellinic acid is then prenylated by the polyprenyl transferase ausN. Further epoxidation by the FAD-dependent monooxygenase ausM and cyclization by the probable terpene cyclase ausL lead to the formation of protoaustinoid A. Protoaustinoid A is then oxidized to spiro-lactone preaustinoid A3 by the combined action of the FAD-binding monooxygenases ausB and ausC, and the dioxygenase ausE. Acid-catalyzed keto-rearrangement and ring contraction of the tetraketide portion of preaustinoid A3 by ausJ lead to the formation of preaustinoid A4. The aldo-keto reductase ausK, with the help of ausH, is involved in the next step by transforming preaustinoid A4 into isoaustinone which is in turn hydroxylated by the P450 monooxygenase ausI to form austinolide. Finally, the cytochrome P450 monooxygenase ausG modifies austinolide to austinol. Austinol can be further modified to dehydroaustinol which forms a diffusible complex with diorcinol that initiates conidiation. Due to genetic rearrangements of the clusters and the subsequent loss of some enzymes, the end products of the Emericella nidulans austinoid biosynthesis clusters are austinol and dehydroaustinol, even if additional enzymes, such as the O-acetyltransferase ausQ and the cytochrome P450 monooxygenase ausR are still functional. This Emericella nidulans (strain FGSC A4 / ATCC 38163 / CBS 112.46 / NRRL 194 / M139) (Aspergillus nidulans) protein is Terpene cyclase ausL.